The following is a 298-amino-acid chain: Methylsterol monooxygenase 1-1 (298 aa).

3 helical membrane-spanning segments follow: residues 42 to 62, 96 to 116, and 118 to 138; these read ILFL…VELA, FILV…MIEI, and SGLP…YFLI. A Fatty acid hydroxylase domain is found at 132–267; sequence LVVYFLIEDY…FTYCDYIYGT (136 aa). The Histidine box-1 signature appears at 147–151; the sequence is HRFFH. The Histidine box-2 motif lies at 160-164; it reads HRVHH. Residues 189-209 traverse the membrane as a helical segment; the sequence is TFMGPAIAPGHMITFWLWIAL. Positions 239 to 245 match the Histidine box-3 motif; it reads YHDYHHY.

Belongs to the sterol desaturase family. As to quaternary structure, interacts with ACBP1. It depends on Fe cation as a cofactor. Expressed in rosettes, stems, roots, floral buds, flowers and siliques.

Its subcellular location is the endoplasmic reticulum membrane. It carries out the reaction 4,4-dimethyl-5alpha-cholest-7-en-3beta-ol + 6 Fe(II)-[cytochrome b5] + 3 O2 + 5 H(+) = 4alpha-carboxy-4beta-methyl-5alpha-cholest-7-ene-3beta-ol + 6 Fe(III)-[cytochrome b5] + 4 H2O. The enzyme catalyses 24-methylenecycloartanol + 6 Fe(II)-[cytochrome b5] + 3 O2 + 5 H(+) = 4alpha-carboxy-4beta,14alpha-dimethyl-9beta,19-cyclo-5alpha-ergost-24(24(1))-en-3beta-ol + 6 Fe(III)-[cytochrome b5] + 4 H2O. In terms of biological role, non-heme iron oxygenase involved in sterols biosynthesis by catalyzing the removal of the first methyl group at the C-4 position. 4,4-dimethyl-9-beta,19-cyclopropylsterols such as 24-methylenecycloartanol are the preferred substrates. Acts as a rate-limiting enzyme in the sterol pathway via interaction with ACBP1; sterols serve as lipid modulators for gene expression of homeodomain-leucine zipper IV transcription factors. Together with SMO1-2, involved in the maintenance of sterol composition to balance auxin and cytokinin activities during embryogenesis. In Arabidopsis thaliana (Mouse-ear cress), this protein is Methylsterol monooxygenase 1-1.